The primary structure comprises 359 residues: Peptide chain release factor 1 (359 aa).

Q236 carries the N5-methylglutamine modification.

It belongs to the prokaryotic/mitochondrial release factor family. Methylated by PrmC. Methylation increases the termination efficiency of RF1.

It localises to the cytoplasm. Functionally, peptide chain release factor 1 directs the termination of translation in response to the peptide chain termination codons UAG and UAA. The polypeptide is Peptide chain release factor 1 (Streptococcus agalactiae serotype V (strain ATCC BAA-611 / 2603 V/R)).